A 198-amino-acid chain; its full sequence is Nucleoid occlusion factor SlmA (198 aa).

One can recognise an HTH tetR-type domain in the interval 9-70; the sequence is RNRREEILQA…SLIEFIEDSL (62 aa). The H-T-H motif DNA-binding region spans 33–52; it reads TTAKLAANVGVSEAALYRHF. A coiled-coil region spans residues 119–144; it reads DRLQGRINQLYERIEVQLRQVLRERK.

This sequence belongs to the nucleoid occlusion factor SlmA family. As to quaternary structure, homodimer. Interacts with FtsZ.

The protein localises to the cytoplasm. It is found in the nucleoid. Functionally, required for nucleoid occlusion (NO) phenomenon, which prevents Z-ring formation and cell division over the nucleoid. Acts as a DNA-associated cell division inhibitor that binds simultaneously chromosomal DNA and FtsZ, and disrupts the assembly of FtsZ polymers. SlmA-DNA-binding sequences (SBS) are dispersed on non-Ter regions of the chromosome, preventing FtsZ polymerization at these regions. This is Nucleoid occlusion factor SlmA from Sodalis glossinidius (strain morsitans).